Reading from the N-terminus, the 344-residue chain is Arginine N-succinyltransferase (344 aa).

Residue leucine 125 participates in succinyl-CoA binding. Histidine 229 serves as the catalytic Proton donor.

It belongs to the arginine N-succinyltransferase family.

The enzyme catalyses succinyl-CoA + L-arginine = N(2)-succinyl-L-arginine + CoA + H(+). Its pathway is amino-acid degradation; L-arginine degradation via AST pathway; L-glutamate and succinate from L-arginine: step 1/5. Catalyzes the transfer of succinyl-CoA to arginine to produce N(2)-succinylarginine. In Shigella flexneri, this protein is Arginine N-succinyltransferase.